A 1983-amino-acid chain; its full sequence is Nonribosomal peptide synthetase verP (1983 aa).

The segment at 11-405 (FAQAASRCPD…FRGRKDRTVK (395 aa)) is adenylation 1. In terms of domain architecture, Carrier 1 spans 526–602 (DRHLDTLLTV…DVAPLITSRA (77 aa)). The residue at position 563 (Ser563) is an O-(pantetheine 4'-phosphoryl)serine. The tract at residues 769-1047 (ETDELTVVLT…GQHFKHALYS (279 aa)) is condensation 1. Residues 1089–1469 (QVMGQFPSLI…GRIDRLVKLR (381 aa)) form an adenylation 2 region. Residues 1584-1662 (ITRPKIEDKL…DQINMVRALL (79 aa)) form the Carrier 2 domain. The residue at position 1622 (Ser1622) is an O-(pantetheine 4'-phosphoryl)serine. The tract at residues 1652 to 1976 (KDQINMVRAL…GGLEHPLFEC (325 aa)) is condensation 2.

This sequence belongs to the NRP synthetase family.

It participates in mycotoxin biosynthesis. Its function is as follows. Nonribosomal peptide synthetase; part of the gene cluster that mediates the biosynthesis of 11'-deoxyverticillin A, one of the dimeric epipolythiodioxopiperazines (ETPs) from the verticillin family that act as mycotoxins. 11'-deoxyverticillin A is required for normal conidiation. The nonribosomal peptide synthetase verP is speculated to be responsible for condensation of amino acids to form the carbon skeleton of verticillin, whereas the cluster-specific tailoring enzymes are involved in further modifications leading to the production of 11'-deoxyverticillin A. The chain is Nonribosomal peptide synthetase verP from Clonostachys rogersoniana.